The following is a 478-amino-acid chain: 5-hydroxytryptamine receptor 3A (478 aa).

An N-terminal signal peptide occupies residues 1–23 (MLLWVQQALLALLLPTLLAQGEA). Topologically, residues 24–241 (RRSRNTTRPA…MKFYVVIRRR (218 aa)) are extracellular. Residues asparagine 28, asparagine 104, asparagine 170, and asparagine 186 are each glycosylated (N-linked (GlcNAc...) asparagine). An intrachain disulfide couples cysteine 157 to cysteine 171. The chain crosses the membrane as a helical span at residues 242 to 268 (PLFYVVSLLLPSIFLMVMDIVGFYLPP). The Cytoplasmic segment spans residues 269-273 (NSGER). A helical membrane pass occupies residues 274 to 292 (VSFKITLLLGYSVFLIIVS). At 293–302 (DTLPATAIGT) the chain is on the extracellular side. Residues 303–321 (PLIGVYFVVCMALLVISLA) traverse the membrane as a helical segment. Residues 322-455 (ETIFIVRLVH…GSVLDKLLFH (134 aa)) lie on the Cytoplasmic side of the membrane. A disordered region spans residues 389–408 (GGPQDFEKSPRDRCSPPPPP). The span at 393 to 402 (DFEKSPRDRC) shows a compositional bias: basic and acidic residues. Positions 414-450 (AVCGLLQELSSIRQFLEKRDEIREVARDWLRVGSVLD) are HA-stretch; determines single-channel conductance in 5-HT3 receptors. The chain crosses the membrane as a helical span at residues 456-475 (IYLLAVLAYSITLVMLWSIW). Topologically, residues 476–478 (QYA) are extracellular.

The protein belongs to the ligand-gated ion channel (TC 1.A.9) family. 5-hydroxytryptamine receptor (TC 1.A.9.2) subfamily. HTR3A sub-subfamily. As to quaternary structure, forms homopentameric as well as heteropentameric serotonin-activated cation-selective channel complexes with HTR3B or HTR3C or HTR3D or HTR3E. The homomeric complex is functional but exhibits low conductance with modified voltage dependence, and decreased agonist and antagonist affinity. Heteropentameric complexes display properties which resemble that of neuronal serotonin-activated channels in vivo. Interacts with RIC3. In terms of tissue distribution, expressed in cerebral cortex, amygdala, hippocampus, and testis. Detected in monocytes of the spleen and tonsil, in small and large intestine, uterus, prostate, ovary and placenta.

It is found in the postsynaptic cell membrane. The protein resides in the cell membrane. The enzyme catalyses Na(+)(in) = Na(+)(out). It catalyses the reaction K(+)(in) = K(+)(out). It carries out the reaction Ca(2+)(in) = Ca(2+)(out). The catalysed reaction is Mg(2+)(in) = Mg(2+)(out). Functionally, forms serotonin (5-hydroxytryptamine/5-HT3)-activated cation-selective channel complexes, which when activated cause fast, depolarizing responses in neurons. This chain is 5-hydroxytryptamine receptor 3A, found in Homo sapiens (Human).